The sequence spans 282 residues: Glutamate--LysW ligase ArgX (282 aa).

Residues lysine 87, lysine 127, 131-137, and 167-178 each bind ATP; these read GSWGRLV and QEYINYKSRDIR. Residues 91–277 enclose the ATP-grasp domain; the sequence is YSKLYREGIP…VAEELVSYVK (187 aa). Arginine 192 is a substrate binding site. Asparagine 202 contributes to the ATP binding site. 203 to 204 serves as a coordination point for substrate; the sequence is IA. Residues aspartate 237, glutamate 250, and asparagine 252 each coordinate Mg(2+). 256-260 serves as a coordination point for substrate; the sequence is EFKGF. A GF motif that is essential for ArgX substrate specificity motif is present at residues 259-260; the sequence is GF.

This sequence belongs to the RimK family. LysX subfamily. In terms of assembly, homotetramer. Interacts with LysW. Mg(2+) is required as a cofactor.

It carries out the reaction [amino-group carrier protein]-C-terminal-L-glutamate + L-glutamate + ATP = [amino-group carrier protein]-C-terminal-gamma-(L-glutamyl)-L-glutamate + ADP + phosphate + H(+). Its pathway is amino-acid biosynthesis; L-arginine biosynthesis. Functionally, catalyzes the ATP-dependent formation of a covalent bond between the amino group of glutamate and the gamma-carboxyl group of the C-terminal glutamate residue in LysW. This is Glutamate--LysW ligase ArgX from Sulfolobus acidocaldarius (strain ATCC 33909 / DSM 639 / JCM 8929 / NBRC 15157 / NCIMB 11770).